The sequence spans 136 residues: Small ribosomal subunit protein uS8c (136 aa).

Belongs to the universal ribosomal protein uS8 family. In terms of assembly, part of the 30S ribosomal subunit.

It localises to the plastid. One of the primary rRNA binding proteins, it binds directly to 16S rRNA central domain where it helps coordinate assembly of the platform of the 30S subunit. This is Small ribosomal subunit protein uS8c (rps8) from Helicosporidium sp. subsp. Simulium jonesii (Green alga).